A 603-amino-acid polypeptide reads, in one-letter code: Adenine deaminase 1 (603 aa).

The protein belongs to the metallo-dependent hydrolases superfamily. Adenine deaminase family. It depends on Mn(2+) as a cofactor.

The enzyme catalyses adenine + H2O + H(+) = hypoxanthine + NH4(+). This is Adenine deaminase 1 from Carboxydothermus hydrogenoformans (strain ATCC BAA-161 / DSM 6008 / Z-2901).